The chain runs to 454 residues: Protection of telomeres protein 1b (454 aa).

This sequence belongs to the telombin family. In terms of assembly, interacts with TRB1, TRB2 and TRB3. Expressed at low levels in roots, rosette leaves, cauline leaves, stems and flowers.

The protein resides in the nucleus. Its subcellular location is the chromosome. It localises to the telomere. In terms of biological role, negatively regulates telomerase activity and participates in chromosome end protection. Binds RNA non-specifically. Associates with a regulatory Pol III-dependent lncRNA, which represses telomerase activity in response to DNA damage. Binds single-stranded telomeric DNA with weak affinity. In Arabidopsis thaliana (Mouse-ear cress), this protein is Protection of telomeres protein 1b.